The following is a 294-amino-acid chain: HTH-type transcriptional regulator TcbR (294 aa).

One can recognise an HTH lysR-type domain in the interval 1–58; it reads MEFRQLKYFIAVAEAGNMAAAAKRLHVSQPPITRQMQALEADLGVVLLERSHRGIELT. Positions 18-37 form a DNA-binding region, H-T-H motif; the sequence is MAAAAKRLHVSQPPITRQMQ.

The protein belongs to the LysR transcriptional regulatory family.

Its function is as follows. Involved in regulation of chlorinated catechol metabolism. Transcriptional activator of the tcbCDEF chlorocatechol oxidative operon. May bind 2-chloromuconate as an inducer. This Pseudomonas sp. (strain P51) protein is HTH-type transcriptional regulator TcbR (tcbR).